The primary structure comprises 36 residues: Photosystem I reaction center subunit VIII (36 aa).

Residues 7-29 (PSILVPLVGLVFPAITLASLFIY) form a helical membrane-spanning segment.

It belongs to the PsaI family.

The protein resides in the plastid. Its subcellular location is the chloroplast thylakoid membrane. Its function is as follows. May help in the organization of the PsaL subunit. This is Photosystem I reaction center subunit VIII from Anthoceros angustus (Hornwort).